Reading from the N-terminus, the 389-residue chain is 3-ketoacyl-CoA thiolase (389 aa).

Catalysis depends on Cys91, which acts as the Acyl-thioester intermediate. Residues His343 and Cys373 each act as proton acceptor in the active site.

It belongs to the thiolase-like superfamily. Thiolase family. Heterotetramer of two alpha chains (FadB) and two beta chains (FadA).

The protein localises to the cytoplasm. It catalyses the reaction an acyl-CoA + acetyl-CoA = a 3-oxoacyl-CoA + CoA. Its pathway is lipid metabolism; fatty acid beta-oxidation. Functionally, catalyzes the final step of fatty acid oxidation in which acetyl-CoA is released and the CoA ester of a fatty acid two carbons shorter is formed. This is 3-ketoacyl-CoA thiolase from Pseudoalteromonas translucida (strain TAC 125).